Reading from the N-terminus, the 456-residue chain is MDIKTLKGFKDYLPKDSLIRIHIVRQIFSVLNSYNFDLIDTPVLEYSELLLKKSGDEAEKQIYRFKDNGGRDVSMRFDLTVPFARFIATNASNLKFPFRRSQFGKVFRGENSQKGRYREFMQFDFDIVGEDSFRGDAEILSVVYYGLEEIFLNFIEGINKKFIIHYSHLGILNSFFEKLGIKEKSLFILRNIDKIDKIGVDKVKEALLLKIEKEVVDSILNLVNLQGTFKEKIQALKSILGDNESVKRVEDVFQHLSLLKIQDSFNLNLKISRGLDYYTGIVFESEVFDSNMGSVCSGGRYDNLVSSFSSSIQKISGVGGSFGVDRIKDIIDLEKFSYVKIFVTKARSKVLIVNLDSALQDYYYELATRFRNHDYSKVKNISCEVYFKNKNGKNIKEQIEYALSKEIRFLVFVGQEEYKENKMKVRDLTKKEELLLSFEESINVIKCSEKLLCTPF.

The protein belongs to the class-II aminoacyl-tRNA synthetase family. Homodimer.

It localises to the cytoplasm. The catalysed reaction is tRNA(His) + L-histidine + ATP = L-histidyl-tRNA(His) + AMP + diphosphate + H(+). This chain is Histidine--tRNA ligase, found in Borreliella afzelii (strain PKo) (Borrelia afzelii).